We begin with the raw amino-acid sequence, 382 residues long: UDP-N-acetylglucosamine--N-acetylmuramyl-(pentapeptide) pyrophosphoryl-undecaprenol N-acetylglucosamine transferase (382 aa).

Residues Thr-22–Gly-24, Asn-134, Arg-186, Ser-212, Ala-285–Glu-290, and Gln-311 contribute to the UDP-N-acetyl-alpha-D-glucosamine site.

It belongs to the glycosyltransferase 28 family. MurG subfamily.

The protein resides in the cell inner membrane. The catalysed reaction is di-trans,octa-cis-undecaprenyl diphospho-N-acetyl-alpha-D-muramoyl-L-alanyl-D-glutamyl-meso-2,6-diaminopimeloyl-D-alanyl-D-alanine + UDP-N-acetyl-alpha-D-glucosamine = di-trans,octa-cis-undecaprenyl diphospho-[N-acetyl-alpha-D-glucosaminyl-(1-&gt;4)]-N-acetyl-alpha-D-muramoyl-L-alanyl-D-glutamyl-meso-2,6-diaminopimeloyl-D-alanyl-D-alanine + UDP + H(+). It participates in cell wall biogenesis; peptidoglycan biosynthesis. Cell wall formation. Catalyzes the transfer of a GlcNAc subunit on undecaprenyl-pyrophosphoryl-MurNAc-pentapeptide (lipid intermediate I) to form undecaprenyl-pyrophosphoryl-MurNAc-(pentapeptide)GlcNAc (lipid intermediate II). This is UDP-N-acetylglucosamine--N-acetylmuramyl-(pentapeptide) pyrophosphoryl-undecaprenol N-acetylglucosamine transferase from Pseudoalteromonas atlantica (strain T6c / ATCC BAA-1087).